The following is a 1980-amino-acid chain: Unconventional myosin-IXb (1980 aa).

Position 2 is an N-acetylserine (S2). Residues 15–114 (ATFHLHIYPQ…YYFLLQERNA (100 aa)) form the Ras-associating domain. Residues 146–954 (ADFDDLCNLP…ERQALQERLH (809 aa)) form the Myosin motor domain. 239–246 (GESGSGKT) lines the ATP pocket. A disordered region spans residues 715–736 (GVSSPVTRSHVEELPRGANTPS). Phosphoserine occurs at positions 717 and 718. The interval 845–856 (KAEPFFIRCIRS) is actin-binding. The interval 941–1045 (LKETERQALQ…CRGHLQRRSF (105 aa)) is neck or regulatory domain. IQ domains follow at residues 958-978 (LRRI…RHFV), 981-1001 (KHAA…RTLE), 1002-1024 (RTRA…AYHH), and 1025-1054 (QRHS…EKQK). S1046 bears the Phosphoserine mark. The tail stretch occupies residues 1046–1980 (SQMMLEKQKA…ERAVRGAAEE (935 aa)). Disordered stretches follow at residues 1049–1281 (MLEK…HPDT), 1302–1380 (SQSL…QGDS), and 1394–1449 (DKKP…NRKV). Positions 1097–1106 (TWMNSKSPNG) are enriched in polar residues. Phosphoserine occurs at positions 1108, 1115, and 1177. 2 stretches are compositionally biased toward basic and acidic residues: residues 1129–1177 (ESHE…RKAS) and 1186–1195 (EDTKEPREDG). 6 positions are modified to phosphoserine: S1220, S1222, S1229, S1237, S1243, and S1247. Low complexity predominate over residues 1235–1247 (RVSPVLPSSSLES). Over residues 1250-1265 (DEDKGENSTKVQDKPE) the composition is skewed to basic and acidic residues. A phosphoserine mark is found at S1266, S1268, and S1304. T1319 carries the post-translational modification Phosphothreonine. S1327, S1329, and S1337 each carry phosphoserine. Positions 1327-1344 (SFSTSDVSKLSPVKTSTE) are enriched in polar residues. A Phorbol-ester/DAG-type zinc finger spans residues 1592-1641 (GHVFASYQVNIPQSCEQCLSYIWLMDKALLCSVCKMTCHKKCVHKIQSYC). Phosphoserine is present on S1649. The 186-residue stretch at 1663–1848 (DSLTSDKASV…MLIKEQMRKY (186 aa)) folds into the Rho-GAP domain. The tract at residues 1699–1704 (AANRTR) is interaction with RHOA. A coiled-coil region spans residues 1841–1861 (IKEQMRKYKVKMEEINHLEAA). The residue at position 1886 (S1886) is a Phosphoserine. The interval 1891–1923 (VRTKSPRTPVVQDLEELGALPEEAAGGDEDREK) is disordered. Positions 1918 to 1948 (DEDREKEILMERIQSIKEEKEDITYRLPELD) form a coiled coil. Residues S1932, S1952, and S1959 each carry the phosphoserine modification. The segment covering 1937–1953 (KEDITYRLPELDPRGSD) has biased composition (basic and acidic residues). The disordered stretch occupies residues 1937–1980 (KEDITYRLPELDPRGSDEENLDSETSASTESLLEERAVRGAAEE). T1965 carries the phosphothreonine modification. The segment covering 1969 to 1980 (LEERAVRGAAEE) has biased composition (basic and acidic residues).

Belongs to the TRAFAC class myosin-kinesin ATPase superfamily. Myosin family. As to quaternary structure, interacts (via IQ domains) with CALM. Interacts with RHOA. Interacts (via Rho-GAP domain) with ROBO1; this inhibits the interaction with RHOA and the stimulation of RHOA GTPase activity, and thereby increases the levels of active RHOA. As to expression, expressed in testis, lung, thymus, brain, liver, spleen and heart muscle. Detected in lung, testis, spleen and liver, and at reduced level in different brain regions (at protein level).

It localises to the cytoplasm. It is found in the cell cortex. The protein localises to the perinuclear region. The protein resides in the cytoskeleton. Its function is as follows. Myosins are actin-based motor molecules with ATPase activity. Unconventional myosins serve in intracellular movements. Binds actin with high affinity both in the absence and presence of ATP and its mechanochemical activity is inhibited by calcium ions. Also acts as a GTPase activator for RHOA. Plays a role in the regulation of cell migration via its role as RHOA GTPase activator. This is regulated by its interaction with the SLIT2 receptor ROBO1; interaction with ROBO1 impairs interaction with RHOA and subsequent activation of RHOA GTPase activity, and thereby leads to increased levels of active, GTP-bound RHOA. In Rattus norvegicus (Rat), this protein is Unconventional myosin-IXb (Myo9b).